We begin with the raw amino-acid sequence, 1360 residues long: DNA-directed RNA polymerase subunit beta (1360 aa).

It belongs to the RNA polymerase beta chain family. As to quaternary structure, the RNAP catalytic core consists of 2 alpha, 1 beta, 1 beta' and 1 omega subunit. When a sigma factor is associated with the core the holoenzyme is formed, which can initiate transcription.

The enzyme catalyses RNA(n) + a ribonucleoside 5'-triphosphate = RNA(n+1) + diphosphate. In terms of biological role, DNA-dependent RNA polymerase catalyzes the transcription of DNA into RNA using the four ribonucleoside triphosphates as substrates. This chain is DNA-directed RNA polymerase subunit beta, found in Vesicomyosocius okutanii subsp. Calyptogena okutanii (strain HA).